Reading from the N-terminus, the 208-residue chain is Small ribosomal subunit protein uS4 (208 aa).

A disordered region spans residues 28 to 48 (YMERRPYGPGEHGRARKKQDS). One can recognise an S4 RNA-binding domain in the interval 95–160 (MRLDALVLRA…MPPFQVAAAG (66 aa)).

The protein belongs to the universal ribosomal protein uS4 family. In terms of assembly, part of the 30S ribosomal subunit. Contacts protein S5. The interaction surface between S4 and S5 is involved in control of translational fidelity.

In terms of biological role, one of the primary rRNA binding proteins, it binds directly to 16S rRNA where it nucleates assembly of the body of the 30S subunit. With S5 and S12 plays an important role in translational accuracy. The polypeptide is Small ribosomal subunit protein uS4 (Arthrobacter sp. (strain FB24)).